The chain runs to 231 residues: PIAGSMVLAAILLKLGGYGIIRMMQILPTTKTDMFLPFIVLALWGAILANLTCLQQTDLKSLIAYSSVSHMGLVAAAIIIQTPWGLSGAMALMIAHGFTSSALFCLANTTYERTHTRILILTRGFHNILPMTSTWWLLANLMNIATPPSLNFTSELLIMSTLFNWCPTTIILLGLSMLITASYSLHMFLSTQMGSTLLNSQTEPMHSREHLLMTLHLIPLMMISMKPELVI.

Transmembrane regions (helical) follow at residues 1–21, 34–54, 63–85, 89–111, 128–148, 169–189, and 211–231; these read PIAGSMVLAAILLKLGGYGII, MFLPFIVLALWGAILANLTCL, IAYSSVSHMGLVAAAIIIQTPWG, AMALMIAHGFTSSALFCLANTTY, ILPMTSTWWLLANLMNIATPP, TIILLGLSMLITASYSLHMFL, and LLMTLHLIPLMMISMKPELVI.

This sequence belongs to the complex I subunit 4 family.

The protein resides in the mitochondrion membrane. It carries out the reaction a ubiquinone + NADH + 5 H(+)(in) = a ubiquinol + NAD(+) + 4 H(+)(out). Its function is as follows. Core subunit of the mitochondrial membrane respiratory chain NADH dehydrogenase (Complex I) that is believed to belong to the minimal assembly required for catalysis. Complex I functions in the transfer of electrons from NADH to the respiratory chain. The immediate electron acceptor for the enzyme is believed to be ubiquinone. This Porthidium ophryomegas (Slender hognose viper) protein is NADH-ubiquinone oxidoreductase chain 4 (MT-ND4).